Here is a 286-residue protein sequence, read N- to C-terminus: Probable syntaxin-7B (286 aa).

At 1-257 the chain is on the cytoplasmic side; the sequence is MTDRQPLISK…YVYKSSYRKK (257 aa). Residues 97–107 are compositionally biased toward basic and acidic residues; that stretch reads LSTSNKKESSH. Positions 97–160 are disordered; that stretch reads LSTSNKKESS…TNNNNNNNNN (64 aa). Over residues 114–160 the composition is skewed to low complexity; that stretch reads QQQQQQQNNGNSNNNGYNTRGGYNQQQQQQQQQYNDYTNNNNNNNNN. The region spanning 185–247 is the t-SNARE coiled-coil homology domain; sequence NRILDERNAN…EDAVVELEKA (63 aa). The chain crosses the membrane as a helical; Anchor for type IV membrane protein span at residues 258–278; sequence MIIFVICLLVTLVAVGIFLAI. Topologically, residues 279–286 are vesicular; that stretch reads YYGVIKKK.

The protein belongs to the syntaxin family.

The protein localises to the membrane. This Dictyostelium discoideum (Social amoeba) protein is Probable syntaxin-7B (syn7B).